The primary structure comprises 180 residues: Nucleoside-triphosphatase THEP1 (180 aa).

ATP-binding positions include 8 to 15 (GPVGSIKA) and 100 to 107 (VIIIDELG).

Belongs to the THEP1 NTPase family.

The catalysed reaction is a ribonucleoside 5'-triphosphate + H2O = a ribonucleoside 5'-diphosphate + phosphate + H(+). Functionally, has nucleotide phosphatase activity towards ATP, GTP, CTP, TTP and UTP. May hydrolyze nucleoside diphosphates with lower efficiency. The chain is Nucleoside-triphosphatase THEP1 from Picrophilus torridus (strain ATCC 700027 / DSM 9790 / JCM 10055 / NBRC 100828 / KAW 2/3).